Here is a 453-residue protein sequence, read N- to C-terminus: Aryl hydrocarbon receptor nuclear translocator homolog (453 aa).

The bHLH domain occupies 44 to 97 (FARENHSEIERRRRNKMTHYINELAEMVPQCASLGRKPDKLTILRMAVSHMKGI). PAS domains are found at residues 115-193 (DQEL…LDLK) and 277-347 (ASMP…LSDQ). The PAC domain occupies 348–392 (PMRINIRVRTSTDYIPCTVSAYKFMNPYSEQFEYVVATHQIAPQE). The segment at 410–453 (EFGELGGAPSAVDYGQSSSGGWRPEAQGAPQAQWQWDPMNGYNQ) is disordered.

Interacts with hif-1. Heterodimer; efficient DNA binding requires dimerization with another bHLH protein. Forms a heterodimer with ahr-1; binds DNA as heterodimer. Forms a heterodimer with PAS domain-containing protein cky-1; binds DNA as heterodimer. In terms of tissue distribution, expressed in many cell types throughout development, including hypodermal cells, intestinal cells, pharyngeal cells, and neurons. Expressed in every cell during embryo.

It is found in the nucleus. In terms of biological role, transcription factor. Efficient DNA binding requires dimerization with another bHLH protein, such as cky-1 or ahr-1. Regulates transcription of target genes, probably acting in complex with cky-1. Has a role in cellular differentiation. Required for pharyngeal development. In collaboration with ahr-1 it is involved in RMEL/R and SDQR neuron cell migration. Acts in the cellular response to hypoxia. Involved in aggregation behavior by regulating soluble guanylate cyclase gene expression in the URX neurons. The chain is Aryl hydrocarbon receptor nuclear translocator homolog from Caenorhabditis elegans.